The sequence spans 307 residues: Elongation factor Ts (307 aa).

Positions 79 to 82 (TDFV) are involved in Mg(2+) ion dislocation from EF-Tu.

The protein belongs to the EF-Ts family.

The protein resides in the cytoplasm. Associates with the EF-Tu.GDP complex and induces the exchange of GDP to GTP. It remains bound to the aminoacyl-tRNA.EF-Tu.GTP complex up to the GTP hydrolysis stage on the ribosome. The chain is Elongation factor Ts from Bartonella bacilliformis (strain ATCC 35685 / KC583 / Herrer 020/F12,63).